The chain runs to 538 residues: Phosphoenolpyruvate carboxykinase (ATP) (538 aa).

Residues Arg-64, Tyr-205, and Lys-211 each contribute to the substrate site. Residues Lys-211, His-230, and 246–254 (GLSGTGKTT) each bind ATP. The Mn(2+) site is built by Lys-211 and His-230. Asp-267 is a Mn(2+) binding site. Residues Glu-295, Arg-331, 447 to 448 (RI), and Thr-453 each bind ATP. Residue Arg-331 participates in substrate binding.

The protein belongs to the phosphoenolpyruvate carboxykinase (ATP) family. Monomer. It depends on Mn(2+) as a cofactor.

Its subcellular location is the cytoplasm. The enzyme catalyses oxaloacetate + ATP = phosphoenolpyruvate + ADP + CO2. It participates in carbohydrate biosynthesis; gluconeogenesis. Functionally, involved in the gluconeogenesis. Catalyzes the conversion of oxaloacetate (OAA) to phosphoenolpyruvate (PEP) through direct phosphoryl transfer between the nucleoside triphosphate and OAA. This is Phosphoenolpyruvate carboxykinase (ATP) from Pasteurella multocida (strain Pm70).